Consider the following 361-residue polypeptide: UDP-3-O-acylglucosamine N-acyltransferase (361 aa).

H253 serves as the catalytic Proton acceptor.

Belongs to the transferase hexapeptide repeat family. LpxD subfamily. Homotrimer.

The catalysed reaction is a UDP-3-O-[(3R)-3-hydroxyacyl]-alpha-D-glucosamine + a (3R)-hydroxyacyl-[ACP] = a UDP-2-N,3-O-bis[(3R)-3-hydroxyacyl]-alpha-D-glucosamine + holo-[ACP] + H(+). It functions in the pathway bacterial outer membrane biogenesis; LPS lipid A biosynthesis. Functionally, catalyzes the N-acylation of UDP-3-O-acylglucosamine using 3-hydroxyacyl-ACP as the acyl donor. Is involved in the biosynthesis of lipid A, a phosphorylated glycolipid that anchors the lipopolysaccharide to the outer membrane of the cell. The protein is UDP-3-O-acylglucosamine N-acyltransferase of Burkholderia thailandensis (strain ATCC 700388 / DSM 13276 / CCUG 48851 / CIP 106301 / E264).